The primary structure comprises 331 residues: Centriolar satellite-associated tubulin polyglutamylase complex regulator 1 (331 aa).

The tract at residues 1-111 (MLSPERLALP…HCLLQLLCPD (111 aa)) is required for interaction with PCM1. Positions 1 to 225 (MLSPERLALP…SCPPPALVKE (225 aa)) are required for interaction with TPGS1, LRRC49, and TTLL1. The interval 112–331 (FPLELTQKAA…STEETDESET (220 aa)) is required for interaction with TPGS2. Positions 292 to 331 (SCLPSRTPPRVGSPWKPLHRSRKLDAESDGSTEETDESET) are disordered. Residues 318–331 (ESDGSTEETDESET) are compositionally biased toward acidic residues. At Ser-319 the chain carries Phosphoserine.

This sequence belongs to the CSTPP1 family. As to quaternary structure, interacts with PCM1. Interacts with TTLL1, TPGS1, TPGS2 and LRRC49; the interactions link CSTPP1 to the complex TPGC. Binds to alpha-tubulin.

It localises to the cytoplasm. The protein resides in the cytoskeleton. Its subcellular location is the microtubule organizing center. The protein localises to the centrosome. It is found in the centriolar satellite. In terms of biological role, regulator of the tubulin polyglutamylase complex (TPGC) that controls cytoskeletal organization, nuclear shape, and cilium disassembly by balancing microtubule and actin assembly. Regulates the assembly and stability of the TPGC and thereby modulates polyglutamylation of the microtubule, which antagonizes MAP4 binding. The protein is Centriolar satellite-associated tubulin polyglutamylase complex regulator 1 (Cstpp1) of Rattus norvegicus (Rat).